Consider the following 38-residue polypeptide: Kappa-actitoxin-Bcs3a (38 aa).

One can recognise a ShKT domain in the interval 2–37 (CIDRFPTGTCKHVKKGGSCKNSQKYRINCAKTCGLC). Intrachain disulfides connect C2–C37, C11–C30, and C20–C34. A crucial for binding to potassium channels region spans residues 25–26 (KY).

It belongs to the sea anemone type 1 potassium channel toxin family. Type 1b subfamily.

The protein localises to the secreted. The protein resides in the nematocyst. Inhibits voltage-gated potassium channels (IC(50)=405.0 nM for rKCNA1/Kv1.1, IC(50)=0.03 nM for rKCNA2/Kv1.2, IC(50)=1.31 nM for rKCNA6/Kv1.6, IC(50)=74.11 nM for hKCNA3/Kv1.3, and IC(50)=247.69 nM for insect Shaker IR). Binds the Shaker IR channels in a voltage-independent manner. This Bunodosoma caissarum (Sea anemone) protein is Kappa-actitoxin-Bcs3a.